Consider the following 246-residue polypeptide: Hydroxyacylglutathione hydrolase (246 aa).

H58, H60, D62, H63, H117, D137, and H175 together coordinate Zn(2+).

It belongs to the metallo-beta-lactamase superfamily. Glyoxalase II family. In terms of assembly, monomer. Zn(2+) is required as a cofactor.

It catalyses the reaction an S-(2-hydroxyacyl)glutathione + H2O = a 2-hydroxy carboxylate + glutathione + H(+). It functions in the pathway secondary metabolite metabolism; methylglyoxal degradation; (R)-lactate from methylglyoxal: step 2/2. Its function is as follows. Thiolesterase that catalyzes the hydrolysis of S-D-lactoyl-glutathione to form glutathione and D-lactic acid. In Prochlorococcus marinus (strain MIT 9312), this protein is Hydroxyacylglutathione hydrolase.